The sequence spans 355 residues: Uroporphyrinogen decarboxylase (355 aa).

Residues 27-31 (RQAGR), Asp-78, Tyr-155, Ser-210, and His-328 each bind substrate.

This sequence belongs to the uroporphyrinogen decarboxylase family. In terms of assembly, homodimer.

The protein resides in the cytoplasm. It carries out the reaction uroporphyrinogen III + 4 H(+) = coproporphyrinogen III + 4 CO2. Its pathway is porphyrin-containing compound metabolism; protoporphyrin-IX biosynthesis; coproporphyrinogen-III from 5-aminolevulinate: step 4/4. In terms of biological role, catalyzes the decarboxylation of four acetate groups of uroporphyrinogen-III to yield coproporphyrinogen-III. The protein is Uroporphyrinogen decarboxylase of Azotobacter vinelandii (strain DJ / ATCC BAA-1303).